Reading from the N-terminus, the 117-residue chain is Antimicrobial peptide AmAMP1 (117 aa).

The signal sequence occupies residues 1–25 (MPSIRVLFVLLAVILLFMEVKMTSA). The propeptide occupies 26 to 73 (ASIVKDVDEDETLENEDGEAMENSWPWHGVEDTSDYSDLSDLANSEKR). 3 disulfide bridges follow: C76–C115, C85–C108, and C94–C112.

The protein belongs to the coral AMP family.

The protein localises to the secreted. Coral peptide that probably acts as an antimicrobial peptide in the surface mucous layer of planula larvae and likely also in adults. Shows moderate to high activity against some Gram-negative and Gram-positive bacteria (tested on E.coli, B.megaterium, S.aureus, E.aesturaii, B.algicola, Acinetobacter spec.). Does not show antibacterial activity against the coral pathogen V.coralliilyticus. The polypeptide is Antimicrobial peptide AmAMP1 (Acropora millepora (Staghorn coral)).